The sequence spans 394 residues: Obg-like ATPase 1 (394 aa).

An OBG-type G domain is found at 25-282; the sequence is LKIGIVGLPN…MAPDEAAKYC (258 aa). Residues 34–39, 56–60, and 94–97 contribute to the ATP site; these read NVGKST, FCTIE, and DIAG. Mg(2+)-binding residues include Ser38 and Thr58. Phe129 is a binding site for GTP. ATP-binding positions include 230–231, Leu231, and 263–265; these read NL and SGV. Residue 263–265 coordinates GTP; it reads SGV. The TGS domain maps to 303–386; sequence NLIYFFTAGP…QDGDIIFFKF (84 aa).

The protein belongs to the TRAFAC class OBG-HflX-like GTPase superfamily. OBG GTPase family. YchF/OLA1 subfamily. As to quaternary structure, monomer (Potential). Interacts with CAR4/GAP1. Requires Mg(2+) as cofactor.

The protein resides in the cytoplasm. It localises to the cytosol. Activated by GAP1. Hydrolyzes ATP, and can also hydrolyze GTP with lower efficiency. Has lower affinity for GTP (Potential). Exhibits GTPase activity. Confers sensitivity to salinity stress by suppressing the anti-oxidation enzymatic activities and increasing lipid peroxidation thus leading to the accumulation of reactive oxygen species (ROS). Acts as a negative regulator of disease resistance against bacterial pathogen. This Arabidopsis thaliana (Mouse-ear cress) protein is Obg-like ATPase 1.